The following is a 458-amino-acid chain: UDP-N-acetylmuramate--L-alanine ligase (458 aa).

Position 118-124 (118-124) interacts with ATP; that stretch reads GTHGKTT.

The protein belongs to the MurCDEF family.

The protein localises to the cytoplasm. The enzyme catalyses UDP-N-acetyl-alpha-D-muramate + L-alanine + ATP = UDP-N-acetyl-alpha-D-muramoyl-L-alanine + ADP + phosphate + H(+). It functions in the pathway cell wall biogenesis; peptidoglycan biosynthesis. Its function is as follows. Cell wall formation. This Clostridium botulinum (strain ATCC 19397 / Type A) protein is UDP-N-acetylmuramate--L-alanine ligase.